A 200-amino-acid polypeptide reads, in one-letter code: uncharacterized protein (200 aa).

Composition is skewed to low complexity over residues methionine 1–serine 13 and proline 28–arginine 44. 2 disordered regions span residues methionine 1–glycine 116 and leucine 137–phenylalanine 200. Basic residues predominate over residues arginine 88–threonine 102. Positions proline 189–phenylalanine 200 are enriched in low complexity.

This is an uncharacterized protein from Homo sapiens (Human).